The sequence spans 353 residues: Probable cytochrome c oxidase subunit 2 (353 aa).

Residues 1–42 form the signal peptide; sequence MTARELVCSQRVGQGLSRRLRPLVLAVTLGVLVVTLSGCSWS. Helical transmembrane passes span 63-83 and 110-130; these read LWIGAVVASLVVGVIVWGLIF and LVLTVTPFLIISMLFYFTVIV. The Cu cation site is built by histidine 246, cysteine 287, cysteine 291, and histidine 295.

Belongs to the cytochrome c oxidase subunit 2 family. It depends on Cu cation as a cofactor. Requires heme as cofactor.

It is found in the cell membrane. The enzyme catalyses 4 Fe(II)-[cytochrome c] + O2 + 8 H(+)(in) = 4 Fe(III)-[cytochrome c] + 2 H2O + 4 H(+)(out). Subunits I and II form the functional core of the enzyme complex. Electrons originating in cytochrome c are transferred via heme a and Cu(A) to the binuclear center formed by heme a3 and Cu(B). This chain is Probable cytochrome c oxidase subunit 2 (ctaC), found in Mycobacterium leprae (strain TN).